The chain runs to 92 residues: MAKRTKKVGITGKYGVRYGSSLRRQVKKLEVQQHARYDCSFCGKKAVKRGAAGIWNCSSCKKTVAGGAYTFSTAAAATVRSTIRRLREMAEA.

A C4-type zinc finger spans residues 39-60 (CSFCGKKAVKRGAAGIWNCSSC).

Belongs to the eukaryotic ribosomal protein eL43 family.

This is Large ribosomal subunit protein eL43 (RPL43) from Eremothecium gossypii (strain ATCC 10895 / CBS 109.51 / FGSC 9923 / NRRL Y-1056) (Yeast).